Reading from the N-terminus, the 144-residue chain is MTVSEIRVRKINPRAKIPKRQSEGAAGYDIHSVESGRIPPNGRKSVRTGLAWDVPQSVVGLVFGRSGLALRNWIEVVETCVHPGEDKELVITLVNNGREVFEYEESSRIAQLVFVPVLSCEIDLVESLDLTERGCLGFGSTGMK.

DUMP contacts are provided by S66, R133, F138, and G139.

This sequence belongs to the dUTPase family. As to quaternary structure, homotrimer. The cofactor is Mg(2+).

It carries out the reaction dUTP + H2O = dUMP + diphosphate + H(+). It participates in pyrimidine metabolism; dUMP biosynthesis; dUMP from dCTP (dUTP route): step 2/2. In terms of biological role, involved in nucleotide metabolism via production of dUMP, the immediate precursor of thymidine nucleotides, and decreases the intracellular concentration of dUTP so that uracil cannot be incorporated into DNA. This Encephalitozoon cuniculi (strain GB-M1) (Microsporidian parasite) protein is Deoxyuridine 5'-triphosphate nucleotidohydrolase (DUT1).